A 379-amino-acid chain; its full sequence is Dual-specificity RNA methyltransferase RlmN (379 aa).

Glutamate 95 (proton acceptor) is an active-site residue. The Radical SAM core domain maps to glutamate 101–aspartate 345. A disulfide bridge links cysteine 108 with cysteine 350. [4Fe-4S] cluster-binding residues include cysteine 115, cysteine 119, and cysteine 122. Residues glycine 176 to glutamate 177, serine 208, serine 230 to histidine 232, and asparagine 307 contribute to the S-adenosyl-L-methionine site. Cysteine 350 functions as the S-methylcysteine intermediate in the catalytic mechanism.

Belongs to the radical SAM superfamily. RlmN family. Requires [4Fe-4S] cluster as cofactor.

Its subcellular location is the cytoplasm. The catalysed reaction is adenosine(2503) in 23S rRNA + 2 reduced [2Fe-2S]-[ferredoxin] + 2 S-adenosyl-L-methionine = 2-methyladenosine(2503) in 23S rRNA + 5'-deoxyadenosine + L-methionine + 2 oxidized [2Fe-2S]-[ferredoxin] + S-adenosyl-L-homocysteine. The enzyme catalyses adenosine(37) in tRNA + 2 reduced [2Fe-2S]-[ferredoxin] + 2 S-adenosyl-L-methionine = 2-methyladenosine(37) in tRNA + 5'-deoxyadenosine + L-methionine + 2 oxidized [2Fe-2S]-[ferredoxin] + S-adenosyl-L-homocysteine. Its function is as follows. Specifically methylates position 2 of adenine 2503 in 23S rRNA and position 2 of adenine 37 in tRNAs. m2A2503 modification seems to play a crucial role in the proofreading step occurring at the peptidyl transferase center and thus would serve to optimize ribosomal fidelity. This chain is Dual-specificity RNA methyltransferase RlmN, found in Burkholderia cenocepacia (strain HI2424).